Consider the following 189-residue polypeptide: Ribose 1,5-bisphosphate phosphokinase PhnN (189 aa).

10-17 lines the ATP pocket; sequence GPSGSGKD.

It belongs to the ribose 1,5-bisphosphokinase family.

It catalyses the reaction alpha-D-ribose 1,5-bisphosphate + ATP = 5-phospho-alpha-D-ribose 1-diphosphate + ADP. It functions in the pathway metabolic intermediate biosynthesis; 5-phospho-alpha-D-ribose 1-diphosphate biosynthesis; 5-phospho-alpha-D-ribose 1-diphosphate from D-ribose 5-phosphate (route II): step 3/3. Catalyzes the phosphorylation of ribose 1,5-bisphosphate to 5-phospho-D-ribosyl alpha-1-diphosphate (PRPP). This chain is Ribose 1,5-bisphosphate phosphokinase PhnN, found in Enterobacter lignolyticus (strain SCF1).